We begin with the raw amino-acid sequence, 337 residues long: Holliday junction branch migration complex subunit RuvB (337 aa).

Residues 1–179 (MTHQVSVLHQ…FSFTGRMSYY (179 aa)) are large ATPase domain (RuvB-L). ATP contacts are provided by residues L18, R19, G60, K63, T64, S65, 126–128 (EDY), R169, Y179, and R216. Mg(2+) is bound at residue T64. The interval 180–250 (SDEDLTTILK…VAEKALAMLL (71 aa)) is small ATPAse domain (RuvB-S). Residues 253 to 337 (DWGLNEIDIK…DNLQSLGEEK (85 aa)) form a head domain (RuvB-H) region. Residues K308 and R313 each coordinate DNA.

Belongs to the RuvB family. As to quaternary structure, homohexamer. Forms an RuvA(8)-RuvB(12)-Holliday junction (HJ) complex. HJ DNA is sandwiched between 2 RuvA tetramers; dsDNA enters through RuvA and exits via RuvB. An RuvB hexamer assembles on each DNA strand where it exits the tetramer. Each RuvB hexamer is contacted by two RuvA subunits (via domain III) on 2 adjacent RuvB subunits; this complex drives branch migration. In the full resolvosome a probable DNA-RuvA(4)-RuvB(12)-RuvC(2) complex forms which resolves the HJ.

It localises to the cytoplasm. It catalyses the reaction ATP + H2O = ADP + phosphate + H(+). Functionally, the RuvA-RuvB-RuvC complex processes Holliday junction (HJ) DNA during genetic recombination and DNA repair, while the RuvA-RuvB complex plays an important role in the rescue of blocked DNA replication forks via replication fork reversal (RFR). RuvA specifically binds to HJ cruciform DNA, conferring on it an open structure. The RuvB hexamer acts as an ATP-dependent pump, pulling dsDNA into and through the RuvAB complex. RuvB forms 2 homohexamers on either side of HJ DNA bound by 1 or 2 RuvA tetramers; 4 subunits per hexamer contact DNA at a time. Coordinated motions by a converter formed by DNA-disengaged RuvB subunits stimulates ATP hydrolysis and nucleotide exchange. Immobilization of the converter enables RuvB to convert the ATP-contained energy into a lever motion, pulling 2 nucleotides of DNA out of the RuvA tetramer per ATP hydrolyzed, thus driving DNA branch migration. The RuvB motors rotate together with the DNA substrate, which together with the progressing nucleotide cycle form the mechanistic basis for DNA recombination by continuous HJ branch migration. Branch migration allows RuvC to scan DNA until it finds its consensus sequence, where it cleaves and resolves cruciform DNA. The protein is Holliday junction branch migration complex subunit RuvB of Chlamydia caviae (strain ATCC VR-813 / DSM 19441 / 03DC25 / GPIC) (Chlamydophila caviae).